The chain runs to 800 residues: Heterogeneous nuclear ribonucleoprotein U (800 aa).

S2 carries the post-translational modification N-acetylserine. S4 bears the Phosphoserine mark. The SAP domain maps to 8-42 (VKKLKVSELKEELKKRRLSDKGLKADLMDRLQAAL). An N6-acetyllysine mark is found at K17 and K21. The segment at 41-257 (ALDNEAGGRP…PQPPVEEEDE (217 aa)) is disordered. At S58 the chain carries Phosphoserine. Composition is skewed to low complexity over residues 71–80 (AGLEQEAAAG) and 103–113 (ENGAAGAADAG). Composition is skewed to acidic residues over residues 114–128 (AMEE…ENGD) and 134–147 (EGED…EGAG). Low complexity predominate over residues 153-173 (GEQQSQPPAAAAQQQPSQQRG). K181 bears the N6-acetyllysine mark. S182 bears the ADP-ribosylserine mark. Low complexity predominate over residues 194–205 (APPGARQGQQQA). Residues 209-242 (GKTEQKGGDKKRGVKRPREDHGRGYFEYIEENKY) are compositionally biased toward basic and acidic residues. Citrulline is present on R231. Position 241 is an N6-acetyllysine; alternate (K241). Residue K241 forms a Glycyl lysine isopeptide (Lys-Gly) (interchain with G-Cter in SUMO1); alternate linkage. Residue K241 forms a Glycyl lysine isopeptide (Lys-Gly) (interchain with G-Cter in SUMO2); alternate linkage. Phosphotyrosine is present on Y242. Phosphoserine is present on residues S243 and S247. The B30.2/SPRY domain maps to 244-440 (RAKSPQPPVE…VEFNFGQKEK (197 aa)). At T262 the chain carries Phosphothreonine. Residue K328 is modified to N6-acetyllysine. Positions 464–648 (PKGPEEKKDC…QKLLEQYKEE (185 aa)) are ATPase domain. A Glycyl lysine isopeptide (Lys-Gly) (interchain with G-Cter in SUMO2) cross-link involves residue K471. Residue 480–487 (GLPGAGKT) participates in ATP binding. An N6-acetyllysine; alternate mark is found at K492 and K500. Glycyl lysine isopeptide (Lys-Gly) (interchain with G-Cter in SUMO2); alternate cross-links involve residues K492 and K500. T508 carries the phosphothreonine modification. K512 participates in a covalent cross-link: Glycyl lysine isopeptide (Lys-Gly) (interchain with G-Cter in SUMO2). Position 527 is an N6-acetyllysine (K527). K541 bears the N6-acetyllysine; alternate mark. A Glycyl lysine isopeptide (Lys-Gly) (interchain with G-Cter in SUMO2); alternate cross-link involves residue K541. K550 participates in a covalent cross-link: Glycyl lysine isopeptide (Lys-Gly) (interchain with G-Cter in SUMO2). At T558 the chain carries Phosphothreonine. Residues K585 and K602 each participate in a glycyl lysine isopeptide (Lys-Gly) (interchain with G-Cter in SUMO2) cross-link. Residues 587–602 (EDYKQRTQKKAEVEGK) form an actin-binding region. K611 is subject to N6-acetyllysine; alternate. A Glycyl lysine isopeptide (Lys-Gly) (interchain with G-Cter in SUMO2); alternate cross-link involves residue K611. A coiled-coil region spans residues 626-653 (DEITYVELQKEEAQKLLEQYKEESKKAL). Glycyl lysine isopeptide (Lys-Gly) (interchain with G-Cter in SUMO2) cross-links involve residues K640 and K646. The segment covering 647–659 (EESKKALPPEKKQ) has biased composition (basic and acidic residues). The interval 647 to 729 (EESKKALPPE…GSGGIGYPYP (83 aa)) is disordered. R678 is modified (omega-N-methylarginine). The span at 686–704 (GGFNMRGGNFRGGAPGNRG) shows a compositional bias: gly residues. The interval 690–715 (MRGGNFRGGAPGNRGGYNRRGNMPQR) is RNA-binding RGG-box. Residues R691, R696, and R703 each carry the asymmetric dimethylarginine modification. 2 positions are modified to asymmetric dimethylarginine; alternate: R709 and R715. An omega-N-methylarginine; alternate mark is found at R709 and R715. The segment covering 715-725 (RGGGGGSGGIG) has biased composition (gly residues). R730 and R737 each carry asymmetric dimethylarginine. Residues 745–774 (NYNRGGMPNRGNYNQNFRGRGNNRGYKNQS) are disordered. The residue at position 789 (K789) is an N6-acetyllysine; alternate. K789 is covalently cross-linked (Glycyl lysine isopeptide (Lys-Gly) (interchain with G-Cter in SUMO2); alternate).

Oligomer (via ATPase domain and RNA-binding RGG-box region); oligomerization occurs upon ATP-binding in a chromatin-associated RNAs (caRNAs)- and transcription-dependent manner and is required for chromatin decompaction. ATP hydrolysis is required to cycle from an oligomeric to monomeric state to compact chromatin. Component of the coding region determinant (CRD)-mediated complex, composed of DHX9, HNRNPU, IGF2BP1, SYNCRIP and YBX1. Identified in the spliceosome C complex. Identified in a IGF2BP1-dependent mRNP granule complex containing untranslated mRNAs. Associates with heterogeneous nuclear ribonucleoprotein (hnRNP) particles. Associates (via middle region) with the C-terminal domain (CTD) RNA polymerase II (Pol II) holoenzyme; this association occurs in a RNA-independent manner. Associates (via middle region) with the core-TFIIH basal transcription factor complex; this association inhibits the CTD phosphorylation of RNA polymerase II holoenzyme by down-regulating TFIIH kinase activity. Associates with the telomerase holoenzyme complex. Associates with spindle microtubules (MTs) in a TPX2-dependent manner. Interacts (via C-terminus) with actin; this interaction is direct and mediates association with the phosphorylated CTD of RNA polymerase II and is disrupted in presence of the long non-coding H19 RNA. Interacts with AURKA. Interacts (via C-terminus) with CBX5; this interaction is, at least in part, RNA-dependent. Interacts with CR2. Interacts with CRY1. Interacts (via C-terminus) with EP300; this interaction enhances DNA-binding to nuclear scaffold/matrix attachment region (S/MAR) elements. Interacts with ERBB4. Interacts with GEMIN5. Interacts with IGF2BP1. Interacts with IGF2BP2 and IGF2BP3. Interacts with NCL; this interaction occurs during mitosis. Interacts (via C-terminus) with NR3C1 (via C-terminus). Interacts with PLK1; this interaction induces phosphorylation of HNRNPU at Ser-58 in mitosis. Interacts with POU3F4. Interacts with SMARCA4; this interaction occurs in embryonic stem cells and stimulates global Pol II-mediated transcription. Interacts (via C-terminus) with TOP2A; this interaction protects the topoisomerase TOP2A from degradation and positively regulates the relaxation of supercoiled DNA by TOP2A in a RNA-dependent manner. Interacts with TPX2; this interaction recruits HNRNPU to spindle microtubules (MTs). Interacts with UBQLN2. Interacts (via RNA-binding RGG-box region) with ZBTB7B; the interaction facilitates the recruitment of long non-coding RNA Blnc1 by ZBTB7B. Interacts with ERCC6. Post-translationally, cleaved at Asp-94 by CASP3 during T-cell apoptosis, resulting in a loss of DNA- and chromatin-binding activities. Extensively phosphorylated. Phosphorylated on Ser-58 by PLK1 and dephosphorylated by protein phosphatase 2A (PP2A) in mitosis. In terms of processing, arg-709 and Arg-715 are dimethylated, probably to asymmetric dimethylarginine. Post-translationally, citrullinated by PADI4.

The protein localises to the nucleus. The protein resides in the nucleus matrix. Its subcellular location is the chromosome. It is found in the nucleus speckle. It localises to the cytoplasm. The protein localises to the cytoskeleton. The protein resides in the microtubule organizing center. Its subcellular location is the centrosome. It is found in the centromere. It localises to the kinetochore. The protein localises to the spindle. The protein resides in the spindle pole. Its subcellular location is the midbody. It is found in the cell surface. It localises to the cytoplasmic granule. In terms of biological role, DNA- and RNA-binding protein involved in several cellular processes such as nuclear chromatin organization, telomere-length regulation, transcription, mRNA alternative splicing and stability, Xist-mediated transcriptional silencing and mitotic cell progression. Plays a role in the regulation of interphase large-scale gene-rich chromatin organization through chromatin-associated RNAs (caRNAs) in a transcription-dependent manner, and thereby maintains genomic stability. Required for the localization of the long non-coding Xist RNA on the inactive chromosome X (Xi) and the subsequent initiation and maintenance of X-linked transcriptional gene silencing during X-inactivation. Plays a role as a RNA polymerase II (Pol II) holoenzyme transcription regulator. Promotes transcription initiation by direct association with the core-TFIIH basal transcription factor complex for the assembly of a functional pre-initiation complex with Pol II in a actin-dependent manner. Blocks Pol II transcription elongation activity by inhibiting the C-terminal domain (CTD) phosphorylation of Pol II and dissociates from Pol II pre-initiation complex prior to productive transcription elongation. Positively regulates CBX5-induced transcriptional gene silencing and retention of CBX5 in the nucleus. Negatively regulates glucocorticoid-mediated transcriptional activation. Key regulator of transcription initiation and elongation in embryonic stem cells upon leukemia inhibitory factor (LIF) signaling. Involved in the long non-coding RNA H19-mediated Pol II transcriptional repression. Participates in the circadian regulation of the core clock component BMAL1 transcription. Plays a role in the regulation of telomere length. Plays a role as a global pre-mRNA alternative splicing modulator by regulating U2 small nuclear ribonucleoprotein (snRNP) biogenesis. Plays a role in mRNA stability. Component of the CRD-mediated complex that promotes MYC mRNA stabilization. Enhances the expression of specific genes, such as tumor necrosis factor TNFA, by regulating mRNA stability, possibly through binding to the 3'-untranslated region (UTR). Plays a role in mitotic cell cycle regulation. Involved in the formation of stable mitotic spindle microtubules (MTs) attachment to kinetochore, spindle organization and chromosome congression. Phosphorylation at Ser-58 by PLK1 is required for chromosome alignement and segregation and progression through mitosis. Also contributes to the targeting of AURKA to mitotic spindle MTs. Binds to double- and single-stranded DNA and RNA, poly(A), poly(C) and poly(G) oligoribonucleotides. Binds to chromatin-associated RNAs (caRNAs). Associates with chromatin to scaffold/matrix attachment region (S/MAR) elements in a chromatin-associated RNAs (caRNAs)-dependent manner. Binds (via RNA-binding RGG-box region) to the long non-coding Xist RNA; this binding is direct and bridges the Xist RNA and the inactive chromosome X (Xi). Binds the long non-coding H19 RNA. Binds to SMN1/2 pre-mRNAs at G/U-rich regions. Binds to small nuclear RNAs (snRNAs). Binds to the 3'-UTR of TNFA mRNA. Also negatively regulates embryonic stem cell differentiation upon LIF signaling. Required for embryonic development. Binds to brown fat long non-coding RNA 1 (Blnc1); facilitates the recruitment of Blnc1 by ZBTB7B required to drive brown and beige fat development and thermogenesis. The chain is Heterogeneous nuclear ribonucleoprotein U from Mus musculus (Mouse).